The primary structure comprises 178 residues: MAELLTLARPYAKAAFAYASEQGATDNWSNALQVLSAAVQDEAFSAYLNRPEHTPAEQVKLFAKVLGEDQSQAVSNFLTLLADNDRLVLLPEIAAEYEQLKSQNNNNVDVVIESAFPLTAEQEQLLKSALEKRFNSTVTVSVEVKPELIAGVVIRAGDQVIDDSALNKLEKMRTRLLA.

Belongs to the ATPase delta chain family. F-type ATPases have 2 components, F(1) - the catalytic core - and F(0) - the membrane proton channel. F(1) has five subunits: alpha(3), beta(3), gamma(1), delta(1), epsilon(1). F(0) has three main subunits: a(1), b(2) and c(10-14). The alpha and beta chains form an alternating ring which encloses part of the gamma chain. F(1) is attached to F(0) by a central stalk formed by the gamma and epsilon chains, while a peripheral stalk is formed by the delta and b chains.

It is found in the cell inner membrane. Its function is as follows. F(1)F(0) ATP synthase produces ATP from ADP in the presence of a proton or sodium gradient. F-type ATPases consist of two structural domains, F(1) containing the extramembraneous catalytic core and F(0) containing the membrane proton channel, linked together by a central stalk and a peripheral stalk. During catalysis, ATP synthesis in the catalytic domain of F(1) is coupled via a rotary mechanism of the central stalk subunits to proton translocation. This protein is part of the stalk that links CF(0) to CF(1). It either transmits conformational changes from CF(0) to CF(1) or is implicated in proton conduction. The sequence is that of ATP synthase subunit delta from Acinetobacter baumannii (strain SDF).